The chain runs to 274 residues: Penicillin-insensitive murein endopeptidase (274 aa).

Residues M1–A19 form the signal peptide. 3 disulfide bridges follow: C44–C265, C187–C235, and C216–C223. 6 residues coordinate Zn(2+): H110, H113, D120, D147, H150, and H211. The tract at residues P227–I274 is disordered.

The protein belongs to the peptidase M74 family. As to quaternary structure, dimer. Zn(2+) serves as cofactor.

The protein localises to the periplasm. Its function is as follows. Murein endopeptidase that cleaves the D-alanyl-meso-2,6-diamino-pimelyl amide bond that connects peptidoglycan strands. Likely plays a role in the removal of murein from the sacculus. The sequence is that of Penicillin-insensitive murein endopeptidase from Escherichia coli O1:K1 / APEC.